Here is a 665-residue protein sequence, read N- to C-terminus: Sodium-dependent phosphate transporter 1-B (665 aa).

Helical transmembrane passes span 26–46 (YMWL…SVGA), 67–87 (ACIL…AKVS), 107–127 (LMAG…AASF), 163–183 (IVAS…VLFY), 202–222 (ALPF…MFTG), and 235–255 (GVLL…WFAV). Disordered regions lie at residues 294-345 (VPEE…APKT) and 423-442 (ESEF…AQER). The segment covering 296–306 (EESSVLSSSTP) has biased composition (low complexity). Positions 329 to 338 (ADQKDCKESD) are enriched in basic and acidic residues. The next 4 helical transmembrane spans lie at 499–519 (VSML…FAHG), 548–568 (TPIW…WVWG), 588–608 (FSIE…GLPV), and 638–658 (IFMA…AIMA).

The protein belongs to the inorganic phosphate transporter (PiT) (TC 2.A.20) family.

The protein localises to the membrane. Functionally, sodium-phosphate symporter which plays a fundamental housekeeping role in phosphate transport. In Danio rerio (Zebrafish), this protein is Sodium-dependent phosphate transporter 1-B (slc20a1b).